The primary structure comprises 216 residues: MAVTFSDLHTADGLKALEAHLAGKTYISGDGITKDDVKVFAAVPLKPSAEFPNAARWYDTVAAAVSSRFPGQASGVSASSAPAAAAPAASKDEDDDDDMDLFGDETEEDKKAAAEREAAKPAKKKESGKSSVLMDIKPWDDETDMKKLEEAVRSVQMEGLTWGASKLMPVGYGIKKLQIMLTIIDDLASTPIEEVLCEAPINEYVQSCDIVAFNKI.

The segment at 71 to 131 (GQASGVSASS…AKKKESGKSS (61 aa)) is disordered. Residues 73–89 (ASGVSASSAPAAAAPAA) are compositionally biased toward low complexity. Acidic residues predominate over residues 92–107 (DEDDDDDMDLFGDETE). Positions 108–128 (EDKKAAAEREAAKPAKKKESG) are enriched in basic and acidic residues.

This sequence belongs to the EF-1-beta/EF-1-delta family. EF-1 is composed of 4 subunits: alpha, beta (1B-alpha=beta'), delta (1B-beta), and gamma (1B-gamma).

In terms of biological role, EF-1-beta and EF-1-beta' stimulate the exchange of GDP bound to EF-1-alpha to GTP. This chain is Elongation factor 1-beta, found in Triticum aestivum (Wheat).